Consider the following 324-residue polypeptide: NADH-ubiquinone oxidoreductase chain 1 (324 aa).

Transmembrane regions (helical) follow at residues 5–25 (ILLYLINPLAYIVPILLATAF), 75–95 (FLFLATPTLALTLALLMWMPL), 106–126 (LGLLFILAVSSLTVYTILGSG), 146–166 (ISYEVSLGLILLSMIIFTGGF), 177–197 (TVWLLVPGWPLAMMWYISTLA), 228–248 (LFFLAEYTNILMMNTLSVILF), 259–279 (QISTFYLMMKATLLTLIFLWI), and 299–319 (FLPLTLALILWHAALPIATAS).

Belongs to the complex I subunit 1 family.

The protein resides in the mitochondrion inner membrane. It carries out the reaction a ubiquinone + NADH + 5 H(+)(in) = a ubiquinol + NAD(+) + 4 H(+)(out). Functionally, core subunit of the mitochondrial membrane respiratory chain NADH dehydrogenase (Complex I) that is believed to belong to the minimal assembly required for catalysis. Complex I functions in the transfer of electrons from NADH to the respiratory chain. The immediate electron acceptor for the enzyme is believed to be ubiquinone. The chain is NADH-ubiquinone oxidoreductase chain 1 (MT-ND1) from Squalus acanthias (Spiny dogfish).